The primary structure comprises 203 residues: MKLAIAALLAGSAAAFAPAQSGKASTALNMAFESELGAQPPLGFFDPLGMLADADQERFDRLRYVEVKHGRIAHVAFLGQIVTRNGIHLSGNIDYAGNSFDSFPNGWAAISGPDAIPQAGLLQIVAFVGILELAVMKDVTGEGEFPGDFRNGALDFGWDTFDEETKLSKRAIELNNGRAAMMGILGLMVHEQLGGSIPIVGEM.

A chloroplast-targeting transit peptide spans 1–30 (MKLAIAALLAGSAAAFAPAQSGKASTALNM).

This sequence belongs to the fucoxanthin chlorophyll protein family. In terms of assembly, the LHC complex of chromophytic algae is composed of fucoxanthin, chlorophyll A and C bound non-covalently by fucoxanthin chlorophyll proteins (FCPs). The ratio of pigments in this LHC is; fucoxanthin: chlorophyll C: chlorophyll A; (0.6-1): (0.1-0.3): (1).

Its subcellular location is the plastid. It is found in the chloroplast thylakoid membrane. The light-harvesting complex (LHC) functions as a light receptor, it captures and delivers excitation energy to photosystems with which it is closely associated. Energy is transferred from the carotenoid and chlorophyll C (or B) to chlorophyll A and the photosynthetic reaction centers where it is used to synthesize ATP and reducing power. The protein is Fucoxanthin-chlorophyll a-c binding protein, chloroplastic (FCPA) of Trieres chinensis (Marine centric diatom).